Reading from the N-terminus, the 1167-residue chain is MSLRFLLGRSGSGKTAVCLEEIRRQLQEDPKGRAIVYLVPEQMTFQCEYALIHTEGVGGMIRAQVFSFTRLAWRVLQETGGMTRYHIHDVGVQMMIRKIIEQRKQELKLFGRAADKHGFIEQLNEMITECKRYCLTPGELRRHAKAFEDGPDQPGRRLLADKLSDVALVYEELERSLIGHYLDSEDYLRLLAEHIPRSSYLRDADIYIDGFHHFAPQEYMIIEQLLRHCRRVTVCLTIDRPYDDGMPDELHLFYLPAQTYRQLRELALSNDIAIEEPIVLSANRRHEDRALVHLEAQFHRRPLLPYGAKTDAVHLYEASNRRAEIEAVAREIIRLVRDEGARYRDIALIIRQTEAYRDLVKTVFFDFGIPYFMDEKEPMHHHPLIELVRAALETVVTRWRYEAVFRAVKTDLLFPTDGDLHMWREAADKLENYVLAYGIKGDKWTNNERWAYRRYQALDGLNVPQTDEERQFEDMLNEWREALAAPLRRLERRLRRAEDGRGFCMALYLFLEELQIPKKLEKMSAQAEADGRLVEARQHEQAWNAVVDLLDQYVEMLGTESLPLAEFVKIIEAGLDRLEFSLVPPAMDQVIVAQLDRSRLIDIKYAFVIGANDGVIPAKVKEDGLMAEVEREQLRELGVALAPGGREQLFYDPFFVYLALVCPSRRLYVTYPLADGEGKALMPSPLIKQLTELFPHAPVHLCGNDPFDAPAEKAEAFVTAPRATQTYLISQLRAWKRNYGIDPLWWDVYNTFIGHRDWKEQVRHAVSALFYTNGATPLKKQWSQRLYGKKIQASVSRMEQFQKCPYAHFASHGLRLKERNVFRLEAPDVGQLFHAAIKQIADRLREQHLDWRELSRPDCERLSAEAVERIAPLIQQQVLSSSHRYEYMKRKLKHVVARTTHVLSEHARASGFVPIGLELSFGPNGDLPPLRFRLPDGTVMELVGRIDRVDKAESSQGVLLRIIDYKSSAKTLDLTEVYYGLALQMLTYLDIVLTYAEQLVGQPALPAGVLYFHIHNPIVQAKQWVDDEVEMAKKLLEPFRMRGLLLADVEAIRLMDGRTEDGQWSLIVPAQLTKSGSIHSRSSVASPSDFAALRQHVRRLFIDIGGQIADGVVSIAPYKLKDKTACEFCVFKPVCQFDEALSGNEYRKLAPQTKEAVIEKLAEGKEG.

One can recognise a UvrD-like helicase ATP-binding domain in the interval 1–359 (MSLRFLLGRS…IRQTEAYRDL (359 aa)). ATP is bound at residue 8 to 15 (GRSGSGKT). The region spanning 282–588 (ANRRHEDRAL…EFSLVPPAMD (307 aa)) is the UvrD-like helicase C-terminal domain. The [4Fe-4S] cluster site is built by Cys804, Cys1126, Cys1129, and Cys1135.

It belongs to the helicase family. AddB/RexB type 1 subfamily. As to quaternary structure, heterodimer of AddA and AddB. It depends on Mg(2+) as a cofactor. [4Fe-4S] cluster is required as a cofactor.

In terms of biological role, the heterodimer acts as both an ATP-dependent DNA helicase and an ATP-dependent, dual-direction single-stranded exonuclease. Recognizes the chi site generating a DNA molecule suitable for the initiation of homologous recombination. The AddB subunit has 5' -&gt; 3' nuclease activity but not helicase activity. The chain is ATP-dependent helicase/deoxyribonuclease subunit B from Geobacillus kaustophilus (strain HTA426).